Reading from the N-terminus, the 229-residue chain is Sperm-associated microtubule inner protein 5 (229 aa).

The segment at 181 to 201 (PEFSGPGQTPPSEDPQAPRPC) is disordered.

As to quaternary structure, microtubule inner protein component of sperm flagellar doublet microtubules. As to expression, expressed in testis (at protein level).

It localises to the cytoplasm. The protein resides in the cytoskeleton. Its subcellular location is the flagellum axoneme. It is found in the nucleus. Its function is as follows. Microtubule inner protein (MIP) part of the dynein-decorated doublet microtubules (DMTs) in flagellum axoneme. May serve to reinforce and thus stabilize the microtubule structure in the sperm flagella. This is Sperm-associated microtubule inner protein 5 (Spmip5) from Mus musculus (Mouse).